We begin with the raw amino-acid sequence, 190 residues long: Xanthine phosphoribosyltransferase (190 aa).

Xanthine is bound by residues leucine 20 and asparagine 27. 128–132 (ANGHA) is a binding site for 5-phospho-alpha-D-ribose 1-diphosphate. Lysine 156 is a xanthine binding site.

The protein belongs to the purine/pyrimidine phosphoribosyltransferase family. Xpt subfamily. In terms of assembly, homodimer.

It localises to the cytoplasm. The catalysed reaction is XMP + diphosphate = xanthine + 5-phospho-alpha-D-ribose 1-diphosphate. It functions in the pathway purine metabolism; XMP biosynthesis via salvage pathway; XMP from xanthine: step 1/1. In terms of biological role, converts the preformed base xanthine, a product of nucleic acid breakdown, to xanthosine 5'-monophosphate (XMP), so it can be reused for RNA or DNA synthesis. The sequence is that of Xanthine phosphoribosyltransferase from Pseudomonas aeruginosa (strain ATCC 15692 / DSM 22644 / CIP 104116 / JCM 14847 / LMG 12228 / 1C / PRS 101 / PAO1).